Here is a 314-residue protein sequence, read N- to C-terminus: Probable cell division protein WhiA (314 aa).

A DNA-binding region (H-T-H motif) is located at residues 274 to 308; sequence SLKELGEMISTGPISKSGVNHRLRKLNELADKIRS.

Belongs to the WhiA family.

Its function is as follows. Involved in cell division and chromosome segregation. In Staphylococcus haemolyticus (strain JCSC1435), this protein is Probable cell division protein WhiA.